The sequence spans 178 residues: Photosystem I assembly protein Ycf4 (178 aa).

A run of 2 helical transmembrane segments spans residues 19–39 and 61–81; these read ILVA…SLSS and LVMG…WAVI.

Belongs to the Ycf4 family.

The protein resides in the cellular thylakoid membrane. Its function is as follows. Seems to be required for the assembly of the photosystem I complex. The polypeptide is Photosystem I assembly protein Ycf4 (Synechococcus sp. (strain WH7803)).